The primary structure comprises 394 residues: Actin-related protein 2-B (394 aa).

ATP-binding positions include 160-162 (GDG), 214-218 (RMMKE), and 305-310 (GGSTMY).

Belongs to the actin family. ARP2 subfamily. Component of the Arp2/3 complex composed of actr2/arp2, actr3/arp3, arpc1b, arpc2, arpc3, arpc4 and arpc5.

Its subcellular location is the cytoplasm. The protein localises to the cytoskeleton. The protein resides in the cell projection. It is found in the nucleus. Its function is as follows. ATP-binding component of the Arp2/3 complex, a multiprotein complex that mediates actin polymerization upon stimulation by nucleation-promoting factor (NPF). The Arp2/3 complex mediates the formation of branched actin networks in the cytoplasm, providing the force for cell motility. Seems to contact the pointed end of the daughter actin filament. In addition to its role in the cytoplasmic cytoskeleton, the Arp2/3 complex also promotes actin polymerization in the nucleus, thereby regulating gene transcription and repair of damaged DNA. The Arp2/3 complex promotes homologous recombination (HR) repair in response to DNA damage by promoting nuclear actin polymerization, leading to drive motility of double-strand breaks (DSBs). In Danio rerio (Zebrafish), this protein is Actin-related protein 2-B (actr2b).